Reading from the N-terminus, the 309-residue chain is GDP-6-deoxy-D-mannose reductase (309 aa).

NADP(+)-binding positions include 11-12, Arg32, 47-48, and 71-73; these read FV, DI, and AKS. 114–115 is a binding site for substrate; it reads SS. Tyr140 is a binding site for NADP(+). Substrate-binding positions include Asn169, Asp183, Arg209, and 269–272; that span reads RPSE.

The protein belongs to the NAD(P)-dependent epimerase/dehydratase family. GDP-6-deoxy-D-mannose reductase subfamily.

It catalyses the reaction GDP-alpha-D-rhamnose + NAD(+) = GDP-4-dehydro-alpha-D-rhamnose + NADH + H(+). The enzyme catalyses GDP-alpha-D-rhamnose + NADP(+) = GDP-4-dehydro-alpha-D-rhamnose + NADPH + H(+). In terms of biological role, reductase that catalyzes the conversion of GDP-6-deoxy-D-mannose to GDP-4-dehydro-6-deoxy-D-mannose (GDP-D-rhamnose). The sequence is that of GDP-6-deoxy-D-mannose reductase (rmd) from Aneurinibacillus thermoaerophilus.